Here is a 908-residue protein sequence, read N- to C-terminus: Protein translocase subunit SecA (908 aa).

ATP contacts are provided by residues Gln87, 105 to 109 (GEGKT), and Asp512. The interval 882–908 (DGEKVGRNDPCPCGSGKKYKQCHGKLT) is disordered. Positions 892, 894, 903, and 904 each coordinate Zn(2+). The segment covering 898-908 (KKYKQCHGKLT) has biased composition (basic residues).

This sequence belongs to the SecA family. As to quaternary structure, monomer and homodimer. Part of the essential Sec protein translocation apparatus which comprises SecA, SecYEG and auxiliary proteins SecDF-YajC and YidC. Zn(2+) is required as a cofactor.

The protein resides in the cell inner membrane. The protein localises to the cytoplasm. It carries out the reaction ATP + H2O + cellular proteinSide 1 = ADP + phosphate + cellular proteinSide 2.. Its function is as follows. Part of the Sec protein translocase complex. Interacts with the SecYEG preprotein conducting channel. Has a central role in coupling the hydrolysis of ATP to the transfer of proteins into and across the cell membrane, serving both as a receptor for the preprotein-SecB complex and as an ATP-driven molecular motor driving the stepwise translocation of polypeptide chains across the membrane. This is Protein translocase subunit SecA from Shewanella amazonensis (strain ATCC BAA-1098 / SB2B).